Here is a 323-residue protein sequence, read N- to C-terminus: tRNA dimethylallyltransferase (323 aa).

32–39 (GPTASGKS) lines the ATP pocket. 34–39 (TASGKS) provides a ligand contact to substrate. Residues 57 to 60 (DSMQ) form an interaction with substrate tRNA region.

It belongs to the IPP transferase family. Monomer. Mg(2+) serves as cofactor.

The catalysed reaction is adenosine(37) in tRNA + dimethylallyl diphosphate = N(6)-dimethylallyladenosine(37) in tRNA + diphosphate. Its function is as follows. Catalyzes the transfer of a dimethylallyl group onto the adenine at position 37 in tRNAs that read codons beginning with uridine, leading to the formation of N6-(dimethylallyl)adenosine (i(6)A). The chain is tRNA dimethylallyltransferase from Rhodopseudomonas palustris (strain BisB5).